Reading from the N-terminus, the 876-residue chain is ATPase WRNIP1 (876 aa).

Composition is skewed to low complexity over residues 56–85 and 104–175; these read NKSNGNNSINNNNNNKNTPTKPNLNLTPTK and NNNN…INNN. Residues 56-175 form a disordered region; sequence NKSNGNNSIN…NNNNNNINNN (120 aa). 240–246 is an ATP binding site; sequence PGCGKTT. Disordered stretches follow at residues 621–647, 714–737, and 833–876; these read KDRQQSQDQTQRSSQQQQQQQTQPQQQ, INNKNNDSNIIKKNVNNSLDLNPT, and ETKA…SLDF. 2 stretches are compositionally biased toward low complexity: residues 626–647 and 714–731; these read SQDQTQRSSQQQQQQQTQPQQQ and INNKNNDSNIIKKNVNNS. The segment covering 835–849 has biased composition (polar residues); sequence KAISSTDTKESVSIN. Positions 850–863 are enriched in basic and acidic residues; sequence DSDKDLTTTHKNEQ.

This sequence belongs to the AAA ATPase family. RarA/MGS1/WRNIP1 subfamily.

Its subcellular location is the nucleus. It catalyses the reaction ATP + H2O = ADP + phosphate + H(+). In terms of biological role, functions as a modulator for initiation or reinitiation events during DNA polymerase delta-mediated DNA synthesis. Has an intrinsic ATPase activity that functions as a sensor of DNA damage or of arrested replication forks and regulates the extent of DNA synthesis. This Dictyostelium discoideum (Social amoeba) protein is ATPase WRNIP1.